A 440-amino-acid chain; its full sequence is Ribosomal protein uS12 methylthiotransferase RimO (440 aa).

An MTTase N-terminal domain is found at 6 to 116; the sequence is PKVGFVSLGC…VVTAVHEVVP (111 aa). [4Fe-4S] cluster-binding residues include cysteine 15, cysteine 51, cysteine 80, cysteine 149, cysteine 153, and cysteine 156. The Radical SAM core domain maps to 135–373; that stretch reads LTPRHYAYLK…MAHQQAISAA (239 aa). The TRAM domain occupies 376 to 440; that stretch reads QLKVGKEIEV…DEYDLWAELV (65 aa).

The protein belongs to the methylthiotransferase family. RimO subfamily. The cofactor is [4Fe-4S] cluster.

The protein localises to the cytoplasm. It carries out the reaction L-aspartate(89)-[ribosomal protein uS12]-hydrogen + (sulfur carrier)-SH + AH2 + 2 S-adenosyl-L-methionine = 3-methylsulfanyl-L-aspartate(89)-[ribosomal protein uS12]-hydrogen + (sulfur carrier)-H + 5'-deoxyadenosine + L-methionine + A + S-adenosyl-L-homocysteine + 2 H(+). Functionally, catalyzes the methylthiolation of an aspartic acid residue of ribosomal protein uS12. The polypeptide is Ribosomal protein uS12 methylthiotransferase RimO (Pseudomonas aeruginosa (strain ATCC 15692 / DSM 22644 / CIP 104116 / JCM 14847 / LMG 12228 / 1C / PRS 101 / PAO1)).